The sequence spans 173 residues: MTTIVCVRKNGKVAIGGDGQATLGNCVEKGTVRKVRRLYKDKVVTGFAGSTADAFILRDLFEKKLELHQGHLVKAAVELAKEWRTERSLRRLEAMMIVANESEFLLVSGSGDVIEPEFDVLAIGSGGNFAKSAALALLRTNNELSAAEIVKQALIIAGDIDIYTNHNHVIEEV.

The active site involves Thr-2. The Na(+) site is built by Gly-158, Asp-161, and Thr-164.

It belongs to the peptidase T1B family. HslV subfamily. A double ring-shaped homohexamer of HslV is capped on each side by a ring-shaped HslU homohexamer. The assembly of the HslU/HslV complex is dependent on binding of ATP.

It localises to the cytoplasm. The enzyme catalyses ATP-dependent cleavage of peptide bonds with broad specificity.. Its activity is regulated as follows. Allosterically activated by HslU binding. Its function is as follows. Protease subunit of a proteasome-like degradation complex believed to be a general protein degrading machinery. In Mannheimia succiniciproducens (strain KCTC 0769BP / MBEL55E), this protein is ATP-dependent protease subunit HslV.